Here is a 348-residue protein sequence, read N- to C-terminus: Alanine racemase (348 aa).

The active-site Proton acceptor; specific for D-alanine is the Lys34. The residue at position 34 (Lys34) is an N6-(pyridoxal phosphate)lysine. Residue Arg127 coordinates substrate. Catalysis depends on Tyr243, which acts as the Proton acceptor; specific for L-alanine. Met291 provides a ligand contact to substrate.

Belongs to the alanine racemase family. Pyridoxal 5'-phosphate serves as cofactor.

The catalysed reaction is L-alanine = D-alanine. It functions in the pathway amino-acid biosynthesis; D-alanine biosynthesis; D-alanine from L-alanine: step 1/1. Its function is as follows. Catalyzes the interconversion of L-alanine and D-alanine. May also act on other amino acids. The protein is Alanine racemase (alr) of Coprothermobacter proteolyticus (strain ATCC 35245 / DSM 5265 / OCM 4 / BT).